A 429-amino-acid chain; its full sequence is 3-phosphoshikimate 1-carboxyvinyltransferase (429 aa).

3-phosphoshikimate is bound by residues Lys23, Ser24, and Arg28. Position 23 (Lys23) interacts with phosphoenolpyruvate. Gly97 and Arg125 together coordinate phosphoenolpyruvate. Residues Ser170, Ser171, Gln172, Ser198, Asp314, Asn338, and Lys342 each coordinate 3-phosphoshikimate. Gln172 serves as a coordination point for phosphoenolpyruvate. Asp314 (proton acceptor) is an active-site residue. Residues Arg346, Arg388, and Lys413 each contribute to the phosphoenolpyruvate site.

This sequence belongs to the EPSP synthase family. In terms of assembly, monomer.

The protein localises to the cytoplasm. The catalysed reaction is 3-phosphoshikimate + phosphoenolpyruvate = 5-O-(1-carboxyvinyl)-3-phosphoshikimate + phosphate. It participates in metabolic intermediate biosynthesis; chorismate biosynthesis; chorismate from D-erythrose 4-phosphate and phosphoenolpyruvate: step 6/7. Its function is as follows. Catalyzes the transfer of the enolpyruvyl moiety of phosphoenolpyruvate (PEP) to the 5-hydroxyl of shikimate-3-phosphate (S3P) to produce enolpyruvyl shikimate-3-phosphate and inorganic phosphate. The chain is 3-phosphoshikimate 1-carboxyvinyltransferase from Pectobacterium carotovorum subsp. carotovorum (strain PC1).